We begin with the raw amino-acid sequence, 69 residues long: U2-agatoxin-Ao1i (69 aa).

The signal sequence occupies residues 1–20 (MKAIISLLLISAMVFSMIEA). Residues 21–34 (VPVXXGLQLFESER) constitute a propeptide that is removed on maturation. 3 cysteine pairs are disulfide-bonded: Cys36/Cys52, Cys43/Cys57, and Cys51/Cys67. Leucine amide is present on Leu68.

It belongs to the neurotoxin 01 (U2-agtx) family. Expressed by the venom gland.

The protein resides in the secreted. Its function is as follows. Insect active toxin causing rapid but reversible paralysis in crickets. No activity shown in mammals. Does not show effect on mammalian voltage-gated calcium channels. This chain is U2-agatoxin-Ao1i, found in Agelena orientalis (Funnel-web spider).